A 368-amino-acid chain; its full sequence is NAD(P)H-quinone oxidoreductase subunit 1, chloroplastic (368 aa).

The next 9 helical transmembrane spans lie at 27–47 (FLWI…GVLV), 97–117 (WLFN…YLVI), 130–150 (IGVF…LMAG), 166–186 (AAQS…IALL), 204–224 (FLSW…IASL), 249–269 (YSGM…LVSS), 270–290 (LFVT…FSLF), 305–325 (VISI…FLFI), and 348–368 (FLLP…LFLL).

This sequence belongs to the complex I subunit 1 family. In terms of assembly, NDH is composed of at least 16 different subunits, 5 of which are encoded in the nucleus.

It is found in the plastid. The protein resides in the chloroplast thylakoid membrane. The catalysed reaction is a plastoquinone + NADH + (n+1) H(+)(in) = a plastoquinol + NAD(+) + n H(+)(out). It catalyses the reaction a plastoquinone + NADPH + (n+1) H(+)(in) = a plastoquinol + NADP(+) + n H(+)(out). Functionally, NDH shuttles electrons from NAD(P)H:plastoquinone, via FMN and iron-sulfur (Fe-S) centers, to quinones in the photosynthetic chain and possibly in a chloroplast respiratory chain. The immediate electron acceptor for the enzyme in this species is believed to be plastoquinone. Couples the redox reaction to proton translocation, and thus conserves the redox energy in a proton gradient. This Marchantia polymorpha (Common liverwort) protein is NAD(P)H-quinone oxidoreductase subunit 1, chloroplastic.